Here is a 527-residue protein sequence, read N- to C-terminus: ATP synthase subunit alpha (527 aa).

169-176 (GDRQTGKT) provides a ligand contact to ATP.

Belongs to the ATPase alpha/beta chains family. As to quaternary structure, F-type ATPases have 2 components, CF(1) - the catalytic core - and CF(0) - the membrane proton channel. CF(1) has five subunits: alpha(3), beta(3), gamma(1), delta(1), epsilon(1). CF(0) has three main subunits: a(1), b(2) and c(9-12). The alpha and beta chains form an alternating ring which encloses part of the gamma chain. CF(1) is attached to CF(0) by a central stalk formed by the gamma and epsilon chains, while a peripheral stalk is formed by the delta and b chains.

Its subcellular location is the cell membrane. The enzyme catalyses ATP + H2O + 4 H(+)(in) = ADP + phosphate + 5 H(+)(out). Functionally, produces ATP from ADP in the presence of a proton gradient across the membrane. The alpha chain is a regulatory subunit. This is ATP synthase subunit alpha from Metamycoplasma arthritidis (strain 158L3-1) (Mycoplasma arthritidis).